Consider the following 208-residue polypeptide: Histone H1t (208 aa).

The span at 1-12 (MSETAPAASSTL) shows a compositional bias: polar residues. Residues 1-39 (MSETAPAASSTLVPAPVEKPSSKRRGKKPGLAPARKPRG) form a disordered region. S9 bears the Phosphoserine mark. In terms of domain architecture, H15 spans 38–111 (RGFSVSKLIP…GASGSFKLSK (74 aa)). Residue R56 is modified to Citrulline. Residues 95–208 (LVQTKGTGAS…TDLRKAAGRK (114 aa)) form a disordered region. Residues 121 to 134 (KGKKSASAKAKKMG) are compositionally biased toward basic residues. S141 bears the Phosphoserine mark. Positions 143–154 (KSSKTKAVKKPK) are enriched in basic residues. Residue T156 is modified to Phosphothreonine. Phosphoserine occurs at positions 163 and 178. Residues 199-208 (TDLRKAAGRK) show a composition bias toward basic and acidic residues.

The protein belongs to the histone H1/H5 family. In terms of processing, phosphorylated in early spermatids. Citrullination at Arg-56 (H1R54ci) by PADI4 takes place within the DNA-binding site of H1 and results in its displacement from chromatin and global chromatin decondensation, thereby promoting pluripotency and stem cell maintenance. Testis-specific.

It localises to the nucleus. It is found in the chromosome. Its function is as follows. Testis-specific histone H1 that forms less compacted chromatin compared to other H1 histone subtypes. Formation of more relaxed chromatin may be required to promote chromatin architecture required for proper chromosome regulation during meiosis, such as homologous recombination. Histones H1 act as linkers that bind to nucleosomes and compact polynucleosomes into a higher-order chromatin configuration. The chain is Histone H1t from Mus musculus (Mouse).